An 86-amino-acid polypeptide reads, in one-letter code: Allergen Hum j 3 (86 aa).

The chain is Allergen Hum j 3 from Humulus japonicus (Japanese hop).